A 220-amino-acid chain; its full sequence is LHFPL tetraspan subfamily member 1 protein (220 aa).

An N-terminal signal peptide occupies residues methionine 1–alanine 20. 2 helical membrane-spanning segments follow: residues valine 86–cysteine 106 and alanine 122–tryptophan 142. An N-linked (GlcNAc...) asparagine glycan is attached at asparagine 153. The helical transmembrane segment at leucine 165–tryptophan 185 threads the bilayer.

Belongs to the LHFP family. Widely expressed. Strongly expressed in vagina and ovary. Weakly expressed in spleen, kidney, thymus, testis, brain, lung, intestine and uterus.

Its subcellular location is the membrane. The polypeptide is LHFPL tetraspan subfamily member 1 protein (Mus musculus (Mouse)).